The primary structure comprises 303 residues: ATP phosphoribosyltransferase (303 aa).

The protein belongs to the ATP phosphoribosyltransferase family. Long subfamily. The cofactor is Mg(2+).

The protein localises to the cytoplasm. It carries out the reaction 1-(5-phospho-beta-D-ribosyl)-ATP + diphosphate = 5-phospho-alpha-D-ribose 1-diphosphate + ATP. Its pathway is amino-acid biosynthesis; L-histidine biosynthesis; L-histidine from 5-phospho-alpha-D-ribose 1-diphosphate: step 1/9. With respect to regulation, feedback inhibited by histidine. Catalyzes the condensation of ATP and 5-phosphoribose 1-diphosphate to form N'-(5'-phosphoribosyl)-ATP (PR-ATP). Has a crucial role in the pathway because the rate of histidine biosynthesis seems to be controlled primarily by regulation of HisG enzymatic activity. This Haemophilus influenzae (strain 86-028NP) protein is ATP phosphoribosyltransferase.